The sequence spans 299 residues: MKLEGIYSALLTPFSEDESIDRQAIGALVDFQVRLGIDGVYVGGSSGEAMLQSLDERADYLSDVAAAASGRLTLIAHVGTIATRDALRLSQHAAKSGYQAISAIPPFYYDFSRPEVMAHYRELADVSALPLIVYNFPARTSGFTLPELVELLSHPNIIGIKHTSSDMFQLERIRHAVPDAIVYNGYDEMCLAGFAMGAQGAIGTTYNFMGDLFVALRDCAAAGRIEEARRLQAMANRVIQVLIKVGVMPGSKALLGIMGLPGGPSRRPFRKVEEADLAALREAVAPVLAWRESTSRKSM.

S45 and S46 together coordinate aceneuramate. Catalysis depends on Y134, which acts as the Proton donor. K161 (schiff-base intermediate with substrate) is an active-site residue. Residues T163, G185, D187, and E188 each coordinate aceneuramate.

Belongs to the DapA family. NanA subfamily. Homotetramer.

It localises to the cytoplasm. It carries out the reaction aceneuramate = aldehydo-N-acetyl-D-mannosamine + pyruvate. It participates in amino-sugar metabolism; N-acetylneuraminate degradation; D-fructose 6-phosphate from N-acetylneuraminate: step 1/5. Functionally, catalyzes the reversible aldol cleavage of N-acetylneuraminic acid (sialic acid; Neu5Ac) to form pyruvate and N-acetylmannosamine (ManNAc) via a Schiff base intermediate. This Rhizobium meliloti (strain 1021) (Ensifer meliloti) protein is N-acetylneuraminate lyase.